We begin with the raw amino-acid sequence, 1182 residues long: Intraflagellar transport protein 122 homolog (1182 aa).

8 WD repeats span residues 10–50, 51–91, 93–129, 131–169, 174–217, 219–258, 260–300, and 453–492; these read KAEQ…QPLK, GHKD…LKYT, NDSIQCVSYNPVTHQLASCSSSDFGLWSPEQKSVSKH, SSSKITCCSWTNDGQYLALGMANGIISIRNKNGEEKVKI, GSLS…IGKD, PLNFDPCCISYFTKGEYILVGGSDKQVSLFTKDGVRLGTV, EQNS…HGLY, and KQATAVRCLDMSASRNKLAVVDENDTCLVYDIHTKELLFQ.

As to quaternary structure, component of the IFT complex A (IFT-A) complex. IFT-A complex is divided into a core subcomplex composed of IFT122:IFT140:WDR19 which is associated with TULP3 and a peripheral subcomplex composed of IFT43:WDR35:TTC21B. Interacts with IFT43:WDR35; the interaction connects the 2 IFT-A subcomplexes. Interacts with IFTAP; the interaction associates IFTAP with IFT-A complex.

The protein resides in the cell projection. It is found in the cilium. The protein localises to the cytoplasm. It localises to the cytoskeleton. Its subcellular location is the cilium basal body. In terms of biological role, as a component of the IFT complex A (IFT-A), a complex required for retrograde ciliary transport and entry into cilia of G protein-coupled receptors (GPCRs), it is required in ciliogenesis and ciliary protein trafficking. Involved in cilia formation during neuronal patterning. Acts as a negative regulator of Shh signaling. Required to recruit TULP3 to primary cilia. In Mus musculus (Mouse), this protein is Intraflagellar transport protein 122 homolog.